A 119-amino-acid polypeptide reads, in one-letter code: NAD(P)H-quinone oxidoreductase subunit M (119 aa).

It belongs to the complex I NdhM subunit family. NDH-1 can be composed of about 15 different subunits; different subcomplexes with different compositions have been identified which probably have different functions.

Its subcellular location is the cellular thylakoid membrane. It catalyses the reaction a plastoquinone + NADH + (n+1) H(+)(in) = a plastoquinol + NAD(+) + n H(+)(out). The enzyme catalyses a plastoquinone + NADPH + (n+1) H(+)(in) = a plastoquinol + NADP(+) + n H(+)(out). NDH-1 shuttles electrons from an unknown electron donor, via FMN and iron-sulfur (Fe-S) centers, to quinones in the respiratory and/or the photosynthetic chain. The immediate electron acceptor for the enzyme in this species is believed to be plastoquinone. Couples the redox reaction to proton translocation, and thus conserves the redox energy in a proton gradient. Cyanobacterial NDH-1 also plays a role in inorganic carbon-concentration. The chain is NAD(P)H-quinone oxidoreductase subunit M from Crocosphaera subtropica (strain ATCC 51142 / BH68) (Cyanothece sp. (strain ATCC 51142)).